Consider the following 185-residue polypeptide: Peptidyl-tRNA hydrolase (185 aa).

A tRNA-binding site is contributed by F12. The Proton acceptor role is filled by H17. The tRNA site is built by Y61, N63, and N109.

Belongs to the PTH family. Monomer.

The protein localises to the cytoplasm. It carries out the reaction an N-acyl-L-alpha-aminoacyl-tRNA + H2O = an N-acyl-L-amino acid + a tRNA + H(+). In terms of biological role, hydrolyzes ribosome-free peptidyl-tRNAs (with 1 or more amino acids incorporated), which drop off the ribosome during protein synthesis, or as a result of ribosome stalling. Its function is as follows. Catalyzes the release of premature peptidyl moieties from peptidyl-tRNA molecules trapped in stalled 50S ribosomal subunits, and thus maintains levels of free tRNAs and 50S ribosomes. The polypeptide is Peptidyl-tRNA hydrolase (Borrelia garinii subsp. bavariensis (strain ATCC BAA-2496 / DSM 23469 / PBi) (Borreliella bavariensis)).